Consider the following 382-residue polypeptide: tRNA-specific 2-thiouridylase MnmA (382 aa).

ATP contacts are provided by residues 34-41 (AMSGGVDS) and Leu-60. Catalysis depends on Cys-128, which acts as the Nucleophile. A disulfide bond links Cys-128 and Cys-224. Gly-152 lines the ATP pocket. The segment at 174 to 176 (RDQ) is interaction with tRNA. Catalysis depends on Cys-224, which acts as the Cysteine persulfide intermediate.

The protein belongs to the MnmA/TRMU family.

It localises to the cytoplasm. The catalysed reaction is S-sulfanyl-L-cysteinyl-[protein] + uridine(34) in tRNA + AH2 + ATP = 2-thiouridine(34) in tRNA + L-cysteinyl-[protein] + A + AMP + diphosphate + H(+). In terms of biological role, catalyzes the 2-thiolation of uridine at the wobble position (U34) of tRNA, leading to the formation of s(2)U34. The polypeptide is tRNA-specific 2-thiouridylase MnmA (Sphingopyxis alaskensis (strain DSM 13593 / LMG 18877 / RB2256) (Sphingomonas alaskensis)).